We begin with the raw amino-acid sequence, 394 residues long: Elongation factor Tu (394 aa).

The region spanning 10-205 (KPHMNVGTIG…TMDNYFDLPQ (196 aa)) is the tr-type G domain. Residues 19 to 26 (GHVDHGKT) form a G1 region. 19–26 (GHVDHGKT) contributes to the GTP binding site. Mg(2+) is bound at residue Thr26. Positions 61–65 (GITIN) are G2. Residues 82–85 (DCPG) are G3. Residues 82–86 (DCPGH) and 137–140 (NKLD) contribute to the GTP site. A G4 region spans residues 137 to 140 (NKLD). The interval 173 to 175 (SAF) is G5.

Belongs to the TRAFAC class translation factor GTPase superfamily. Classic translation factor GTPase family. EF-Tu/EF-1A subfamily. As to quaternary structure, monomer.

The protein localises to the cytoplasm. It carries out the reaction GTP + H2O = GDP + phosphate + H(+). In terms of biological role, GTP hydrolase that promotes the GTP-dependent binding of aminoacyl-tRNA to the A-site of ribosomes during protein biosynthesis. The polypeptide is Elongation factor Tu (Borrelia turicatae (strain 91E135)).